The following is a 517-amino-acid chain: GMP synthase [glutamine-hydrolyzing] (517 aa).

Residues 9 to 199 (RILILDFGSQ…VLNVCGCEGL (191 aa)) enclose the Glutamine amidotransferase type-1 domain. Cys-86 functions as the Nucleophile in the catalytic mechanism. Catalysis depends on residues His-173 and Glu-175. Positions 200-392 (WTSASIIEDA…LGLPYNMLYR (193 aa)) constitute a GMPS ATP-PPase domain. An ATP-binding site is contributed by 227–233 (SGGVDSS).

Homodimer.

The enzyme catalyses XMP + L-glutamine + ATP + H2O = GMP + L-glutamate + AMP + diphosphate + 2 H(+). It participates in purine metabolism; GMP biosynthesis; GMP from XMP (L-Gln route): step 1/1. Functionally, catalyzes the synthesis of GMP from XMP. This Aliivibrio salmonicida (strain LFI1238) (Vibrio salmonicida (strain LFI1238)) protein is GMP synthase [glutamine-hydrolyzing].